The primary structure comprises 203 residues: dTTP/UTP pyrophosphatase (203 aa).

The active-site Proton acceptor is the D70.

The protein belongs to the Maf family. YhdE subfamily. A divalent metal cation serves as cofactor.

The protein resides in the cytoplasm. It catalyses the reaction dTTP + H2O = dTMP + diphosphate + H(+). The catalysed reaction is UTP + H2O = UMP + diphosphate + H(+). In terms of biological role, nucleoside triphosphate pyrophosphatase that hydrolyzes dTTP and UTP. May have a dual role in cell division arrest and in preventing the incorporation of modified nucleotides into cellular nucleic acids. This Pseudomonas putida (strain ATCC 47054 / DSM 6125 / CFBP 8728 / NCIMB 11950 / KT2440) protein is dTTP/UTP pyrophosphatase (maf-1).